The following is a 407-amino-acid chain: Probable peptidoglycan glycosyltransferase FtsW (407 aa).

Topologically, residues 1–25 (MSIDFRNIIKPYPSPIITGRGIDLD) are cytoplasmic. The chain crosses the membrane as a helical span at residues 26-46 (FPMLAGCLALLGLGLVMITSA). Residues 47–65 (SSEVAAVQSGNTLYMMIRH) lie on the Periplasmic side of the membrane. A helical membrane pass occupies residues 66 to 86 (LVYLVIGLGACIVTMMIPIAT). Residues 87–89 (WQR) lie on the Cytoplasmic side of the membrane. Residues 90-110 (LGWLMLIGAFGLLIMVILPGI) traverse the membrane as a helical segment. Residues 111-119 (GREVNGSMR) are Periplasmic-facing. Residues 120-140 (WIGFGAFNVQPSEIAKVFVVI) traverse the membrane as a helical segment. At 141–155 (YLAGYLVRRQKEVRE) the chain is on the cytoplasmic side. A helical transmembrane segment spans residues 156–176 (SWMGFFKPFIVLLPMAGLLLM). Residues 177-181 (EPDFG) are Periplasmic-facing. The chain crosses the membrane as a helical span at residues 182 to 202 (ATVVMMGAAAAMLFLGGVGLF). R203 is a topological domain (cytoplasmic). Residues 204–224 (FTLMVVLAVAAVTVLVQAQPY) form a helical membrane-spanning segment. Over 225–283 (RMARLITFTDPWSDQFGSGYQLTQALIAFGRGEWLGVGLGNSVQKQFYLPEAHTDFVFS) the chain is Periplasmic. Residues 284–304 (VLAEELGVVGSLCTVALFVFV) traverse the membrane as a helical segment. Topologically, residues 305–321 (CVRGMYIGMWAEKAKQY) are cytoplasmic. The chain crosses the membrane as a helical span at residues 322–342 (FAAYVAYGLSFLWIGQFLINI). Over 343-355 (GVNVGLLPTKGLT) the chain is Periplasmic. Residues 356–376 (LPFLSYGGSSLVICCACLGLL) form a helical membrane-spanning segment. Residues 377-407 (LRIEWESRTHLGSEEMEFSESDFAEEPTHGR) lie on the Cytoplasmic side of the membrane.

The protein belongs to the SEDS family. FtsW subfamily.

Its subcellular location is the cell inner membrane. The catalysed reaction is [GlcNAc-(1-&gt;4)-Mur2Ac(oyl-L-Ala-gamma-D-Glu-L-Lys-D-Ala-D-Ala)](n)-di-trans,octa-cis-undecaprenyl diphosphate + beta-D-GlcNAc-(1-&gt;4)-Mur2Ac(oyl-L-Ala-gamma-D-Glu-L-Lys-D-Ala-D-Ala)-di-trans,octa-cis-undecaprenyl diphosphate = [GlcNAc-(1-&gt;4)-Mur2Ac(oyl-L-Ala-gamma-D-Glu-L-Lys-D-Ala-D-Ala)](n+1)-di-trans,octa-cis-undecaprenyl diphosphate + di-trans,octa-cis-undecaprenyl diphosphate + H(+). It functions in the pathway cell wall biogenesis; peptidoglycan biosynthesis. Its function is as follows. Peptidoglycan polymerase that is essential for cell division. The protein is Probable peptidoglycan glycosyltransferase FtsW of Pseudomonas fluorescens (strain SBW25).